The sequence spans 449 residues: 3-phosphoshikimate 1-carboxyvinyltransferase (449 aa).

Lys-28, Ser-29, and Arg-33 together coordinate 3-phosphoshikimate. Lys-28 contributes to the phosphoenolpyruvate binding site. 2 residues coordinate phosphoenolpyruvate: Gly-105 and Arg-133. 4 residues coordinate 3-phosphoshikimate: Ser-179, Gln-181, Asp-332, and Lys-359. Gln-181 lines the phosphoenolpyruvate pocket. The active-site Proton acceptor is Asp-332. Residues Arg-363 and Arg-406 each coordinate phosphoenolpyruvate.

Belongs to the EPSP synthase family. In terms of assembly, monomer.

The protein localises to the cytoplasm. It carries out the reaction 3-phosphoshikimate + phosphoenolpyruvate = 5-O-(1-carboxyvinyl)-3-phosphoshikimate + phosphate. It participates in metabolic intermediate biosynthesis; chorismate biosynthesis; chorismate from D-erythrose 4-phosphate and phosphoenolpyruvate: step 6/7. Catalyzes the transfer of the enolpyruvyl moiety of phosphoenolpyruvate (PEP) to the 5-hydroxyl of shikimate-3-phosphate (S3P) to produce enolpyruvyl shikimate-3-phosphate and inorganic phosphate. This Nitrobacter hamburgensis (strain DSM 10229 / NCIMB 13809 / X14) protein is 3-phosphoshikimate 1-carboxyvinyltransferase.